The sequence spans 239 residues: RING finger protein 151 (239 aa).

The segment at 20 to 58 (CSVCHGVLKRPTRLPCSHIFCKKCIFRWLARQNTCPCCR) adopts an RING-type zinc-finger fold. The TRAF-type zinc finger occupies 101-156 (EHQDSCPFELMACPNEGCTVQVLRGVLDEHRQHCQQNGQQRCPLGCGSTLAALEGE).

In terms of assembly, interacts with DTNBP1. In terms of tissue distribution, expressed in testis. Expressed in round spermatids of the stages VII-VIII semniniferous tubules. Expressed in elongating spermatids of stages VIII-IX seminiferous tubules (at protein level).

The protein resides in the cytoplasm. It is found in the nucleus. Its function is as follows. May be involved in acrosome formation of spermatids. The sequence is that of RING finger protein 151 (Rnf151) from Mus musculus (Mouse).